A 428-amino-acid polypeptide reads, in one-letter code: Histidine--tRNA ligase (428 aa).

The protein belongs to the class-II aminoacyl-tRNA synthetase family. Homodimer.

It is found in the cytoplasm. The enzyme catalyses tRNA(His) + L-histidine + ATP = L-histidyl-tRNA(His) + AMP + diphosphate + H(+). This Chromohalobacter salexigens (strain ATCC BAA-138 / DSM 3043 / CIP 106854 / NCIMB 13768 / 1H11) protein is Histidine--tRNA ligase.